The chain runs to 208 residues: Small ribosomal subunit protein eS8 (208 aa).

Positions M1 to A34 are disordered. Residues H7–K26 are compositionally biased toward basic residues.

This sequence belongs to the eukaryotic ribosomal protein eS8 family. Component of the small ribosomal subunit. Identified in a IGF2BP1-dependent mRNP granule complex containing untranslated mRNAs. Part of the small subunit (SSU) processome, composed of more than 70 proteins and the RNA chaperone small nucleolar RNA (snoRNA) U3.

The protein localises to the cytoplasm. The protein resides in the membrane. Its subcellular location is the nucleus. It localises to the nucleolus. In terms of biological role, component of the small ribosomal subunit. The ribosome is a large ribonucleoprotein complex responsible for the synthesis of proteins in the cell. Part of the small subunit (SSU) processome, first precursor of the small eukaryotic ribosomal subunit. During the assembly of the SSU processome in the nucleolus, many ribosome biogenesis factors, an RNA chaperone and ribosomal proteins associate with the nascent pre-rRNA and work in concert to generate RNA folding, modifications, rearrangements and cleavage as well as targeted degradation of pre-ribosomal RNA by the RNA exosome. This chain is Small ribosomal subunit protein eS8 (RpS8), found in Spodoptera frugiperda (Fall armyworm).